Reading from the N-terminus, the 300-residue chain is Tumor necrosis factor receptor superfamily member 6B (300 aa).

An N-terminal signal peptide occupies residues 1 to 29; that stretch reads MRALEGPGLSLLCLVLALPALLPVPAVRG. 4 TNFR-Cys repeats span residues 31 to 70, 72 to 113, 115 to 150, and 152 to 193; these read AETPTYPWRDAETGERLVCAQCPPGTFVQRPCRRDSPTTC, PCPP…NRAC, CRTGFFAHAGFCLEHASCPPGAGVIAPGTPSQNTQC, and PCPP…DTLC. 8 cysteine pairs are disulfide-bonded: C49/C62, C52/C70, C73/C88, C91/C105, C95/C113, C115/C126, C132/C150, and C153/C168. N-linked (GlcNAc...) asparagine glycosylation occurs at N173. A disulfide bond links C174 and C193.

As to expression, detected in fetal lung, brain and liver. Detected in adult stomach, spinal cord, lymph node, trachea, spleen, colon and lung. Highly expressed in several primary tumors from colon, stomach, rectum, esophagus and in SW480 colon carcinoma cells.

Its subcellular location is the secreted. Decoy receptor that can neutralize the cytotoxic ligands TNFS14/LIGHT, TNFSF15 and TNFSF6/FASL. Protects against apoptosis. The sequence is that of Tumor necrosis factor receptor superfamily member 6B (TNFRSF6B) from Homo sapiens (Human).